The sequence spans 298 residues: UDP-N-acetylenolpyruvoylglucosamine reductase (298 aa).

The FAD-binding PCMH-type domain occupies 26-191 (KTGGAADVFV…LDATFSLALE (166 aa)). Arginine 170 is an active-site residue. Serine 220 (proton donor) is an active-site residue. Glutamate 290 is a catalytic residue.

It belongs to the MurB family. FAD is required as a cofactor.

The protein localises to the cytoplasm. The enzyme catalyses UDP-N-acetyl-alpha-D-muramate + NADP(+) = UDP-N-acetyl-3-O-(1-carboxyvinyl)-alpha-D-glucosamine + NADPH + H(+). The protein operates within cell wall biogenesis; peptidoglycan biosynthesis. Functionally, cell wall formation. In Listeria monocytogenes serotype 4b (strain CLIP80459), this protein is UDP-N-acetylenolpyruvoylglucosamine reductase.